A 710-amino-acid chain; its full sequence is Choline transporter-like protein 4 (710 aa).

Residues 1–34 lie on the Cytoplasmic side of the membrane; it reads MGGKQRDEDDEAYGKPVKYDPSFRGPIKNRSCTD. Residues 35–55 form a helical membrane-spanning segment; sequence VICCVLFLLFILGYIVVGIVA. Residues 56–229 lie on the Extracellular side of the membrane; sequence WLYGDPRQVL…KIFEDFAQSW (174 aa). Residues Asn69, Asn155, and Asn197 are each glycosylated (N-linked (GlcNAc...) asparagine). The chain crosses the membrane as a helical span at residues 230-250; it reads YWILVALGVALVLSLLFILLL. At 251–252 the chain is on the cytoplasmic side; the sequence is RL. A helical membrane pass occupies residues 253–273; the sequence is VAGPLVLVLILGVLGVLAYGI. The Extracellular portion of the chain corresponds to 274–309; that stretch reads YYCWEEYRVLRDKGASISQLGFTTNLSAYQSVQETW. The N-linked (GlcNAc...) asparagine glycan is linked to Asn298. A helical membrane pass occupies residues 310–330; sequence LAALIVLAVLEAILLLMLIFL. Residues 331-358 are Cytoplasmic-facing; sequence RQRIRIAIALLKEASKAVGQMMSTMFYP. The chain crosses the membrane as a helical span at residues 359–379; it reads LVTFVLLLICIAYWAMTALYL. At 380 to 455 the chain is on the extracellular side; that stretch reads ATSGQPQYVL…GVLGLFWTLN (76 aa). N-linked (GlcNAc...) asparagine glycosylation is found at Asn393, Asn405, and Asn416. A helical transmembrane segment spans residues 456–476; sequence WVLALGQCVLAGAFASFYWAF. Residues 477-501 are Cytoplasmic-facing; sequence HKPQDIPTFPLISAFIRTLRYHTGS. Residues 502-522 traverse the membrane as a helical segment; the sequence is LAFGALILTLVQIARVILEYI. Residues 523–560 lie on the Extracellular side of the membrane; the sequence is DHKLRGVQNPVARCIMCCFKCCLWCLEKFIKFLNRNAY. A helical transmembrane segment spans residues 561–581; sequence IMIAIYGKNFCVSAKNAFMLL. Topologically, residues 582-597 are cytoplasmic; that stretch reads MRNIVRVVVLDKVTDL. Residues 598–618 form a helical membrane-spanning segment; sequence LLFFGKLLVVGGVGVLSFFFF. The Extracellular portion of the chain corresponds to 619-638; it reads SGRIPGLGKDFKSPHLNYYW. Residues 639-659 traverse the membrane as a helical segment; that stretch reads LPIMTSILGAYVIASGFFSVF. The Cytoplasmic portion of the chain corresponds to 660–710; it reads GMCVDTLFLCFLEDLERNNGSLDRPYYMSKSLLKILGKKNEAPPDNKKRKK.

This sequence belongs to the CTL (choline transporter-like) family. Post-translationally, N-glycosylated; N-glycosylation of Asn-69, Asn-155 and Asn-393 is required for a proper thiamine pyrophosphate uptake. In terms of tissue distribution, highly expressed in colon, also detected in prostate, trachea and lung. Isoform 3 is also expressed in colon but a lower levels. Expressed in colon at low levels.

The protein resides in the membrane. It localises to the apical cell membrane. It catalyses the reaction choline(out) + n H(+)(in) = choline(in) + n H(+)(out). The catalysed reaction is thiamine diphosphate(out) = thiamine diphosphate(in). In terms of biological role, choline transporter that plays a role in the choline-acetylcholine system and is required to the efferent innervation of hair cells in the olivocochlear bundle for the maintenance of physiological function of outer hair cells and the protection of hair cells from acoustic injury. Also described as a thiamine pyrophosphate transporter in colon, may mediate the absorption of microbiota-generated thiamine pyrophosphate and contribute to host thiamine (vitamin B1) homeostasis. Its function is as follows. Also has thiamine pyrophosphate transporter activity. The protein is Choline transporter-like protein 4 of Homo sapiens (Human).